Reading from the N-terminus, the 1151-residue chain is Cation channel sperm-associated protein subunit gamma 1 (1151 aa).

The first 38 residues, 1 to 38, serve as a signal peptide directing secretion; sequence MVSRPAMSPVSPVWPRKPNLWAFWVLRLVLLLSLKSWA. The Extracellular portion of the chain corresponds to 39-1063; that stretch reads EDTLQHCTWL…GLPLSSKRSS (1025 aa). Residue N356 is glycosylated (N-linked (GlcNAc...) asparagine). A helical transmembrane segment spans residues 1064-1084; the sequence is FIVMVSTSFFIALVVFYILFC. At 1085–1151 the chain is on the cytoplasmic side; the sequence is LVWPHIVKAW…NVQAKRAKVA (67 aa). Over residues 1113 to 1123 the composition is skewed to low complexity; that stretch reads SSSSGGFTLHS. Residues 1113–1151 form a disordered region; that stretch reads SSSSGGFTLHSHSSEGSFEGPSRPGTKEDNVQAKRAKVA.

The protein belongs to the CATSPERG family.

It is found in the membrane. This Mus musculus (Mouse) protein is Cation channel sperm-associated protein subunit gamma 1 (Catsperg1).